The sequence spans 869 residues: Alanine--tRNA ligase (869 aa).

Zn(2+) is bound by residues histidine 559, histidine 563, cysteine 660, and histidine 664.

This sequence belongs to the class-II aminoacyl-tRNA synthetase family. Zn(2+) is required as a cofactor.

It is found in the cytoplasm. The enzyme catalyses tRNA(Ala) + L-alanine + ATP = L-alanyl-tRNA(Ala) + AMP + diphosphate. Its function is as follows. Catalyzes the attachment of alanine to tRNA(Ala) in a two-step reaction: alanine is first activated by ATP to form Ala-AMP and then transferred to the acceptor end of tRNA(Ala). Also edits incorrectly charged Ser-tRNA(Ala) and Gly-tRNA(Ala) via its editing domain. The polypeptide is Alanine--tRNA ligase (Herminiimonas arsenicoxydans).